The sequence spans 353 residues: Protein pelota homolog (353 aa).

Belongs to the eukaryotic release factor 1 family. Pelota subfamily. In terms of assembly, monomer. The cofactor is a divalent metal cation.

It is found in the cytoplasm. Functionally, may function in recognizing stalled ribosomes, interact with stem-loop structures in stalled mRNA molecules, and effect endonucleolytic cleavage of the mRNA. May play a role in the release non-functional ribosomes and degradation of damaged mRNAs. Has endoribonuclease activity. The protein is Protein pelota homolog of Methanothermobacter thermautotrophicus (strain ATCC 29096 / DSM 1053 / JCM 10044 / NBRC 100330 / Delta H) (Methanobacterium thermoautotrophicum).